The following is a 465-amino-acid chain: ATP synthase subunit beta 2 (465 aa).

148-155 (GGAGVGKT) is an ATP binding site.

The protein belongs to the ATPase alpha/beta chains family. F-type ATPases have 2 components, CF(1) - the catalytic core - and CF(0) - the membrane proton channel. CF(1) has five subunits: alpha(3), beta(3), gamma(1), delta(1), epsilon(1). CF(0) has three main subunits: a(1), b(2) and c(9-12). The alpha and beta chains form an alternating ring which encloses part of the gamma chain. CF(1) is attached to CF(0) by a central stalk formed by the gamma and epsilon chains, while a peripheral stalk is formed by the delta and b chains.

Its subcellular location is the cell inner membrane. The catalysed reaction is ATP + H2O + 4 H(+)(in) = ADP + phosphate + 5 H(+)(out). Its function is as follows. Produces ATP from ADP in the presence of a proton gradient across the membrane. The catalytic sites are hosted primarily by the beta subunits. The sequence is that of ATP synthase subunit beta 2 from Psychromonas ingrahamii (strain DSM 17664 / CCUG 51855 / 37).